The following is a 440-amino-acid chain: Chromosomal replication initiator protein DnaA (440 aa).

A domain I, interacts with DnaA modulators region spans residues 1–72 (MTELDSLWEA…KEFAQRELGR (72 aa)). The interval 72-103 (RNIEPHYVLEGEFTYTNKKTEDDPTPSFEMDT) is domain II. Residues 104-320 (PLNPHYNFGT…GALTKVQAFA (217 aa)) are domain III, AAA+ region. Residues Gly148, Gly150, Lys151, and Thr152 each contribute to the ATP site. A domain IV, binds dsDNA region spans residues 321–440 (NLSGERITPS…ITKLKAKLRS (120 aa)).

This sequence belongs to the DnaA family. Oligomerizes as a right-handed, spiral filament on DNA at oriC.

The protein resides in the cytoplasm. Functionally, plays an essential role in the initiation and regulation of chromosomal replication. ATP-DnaA binds to the origin of replication (oriC) to initiate formation of the DNA replication initiation complex once per cell cycle. Binds the DnaA box (a 9 base pair repeat at the origin) and separates the double-stranded (ds)DNA. Forms a right-handed helical filament on oriC DNA; dsDNA binds to the exterior of the filament while single-stranded (ss)DNA is stabiized in the filament's interior. The ATP-DnaA-oriC complex binds and stabilizes one strand of the AT-rich DNA unwinding element (DUE), permitting loading of DNA polymerase. After initiation quickly degrades to an ADP-DnaA complex that is not apt for DNA replication. Binds acidic phospholipids. In Limosilactobacillus reuteri (strain DSM 20016) (Lactobacillus reuteri), this protein is Chromosomal replication initiator protein DnaA.